We begin with the raw amino-acid sequence, 37 residues long: Large ribosomal subunit protein bL36 (37 aa).

Belongs to the bacterial ribosomal protein bL36 family.

This is Large ribosomal subunit protein bL36 from Borreliella burgdorferi (strain ATCC 35210 / DSM 4680 / CIP 102532 / B31) (Borrelia burgdorferi).